The sequence spans 120 residues: Ribosome-binding factor A (120 aa).

The protein belongs to the RbfA family. As to quaternary structure, monomer. Binds 30S ribosomal subunits, but not 50S ribosomal subunits or 70S ribosomes.

It is found in the cytoplasm. Functionally, one of several proteins that assist in the late maturation steps of the functional core of the 30S ribosomal subunit. Associates with free 30S ribosomal subunits (but not with 30S subunits that are part of 70S ribosomes or polysomes). Required for efficient processing of 16S rRNA. May interact with the 5'-terminal helix region of 16S rRNA. The protein is Ribosome-binding factor A of Clostridium botulinum (strain Okra / Type B1).